Here is a 291-residue protein sequence, read N- to C-terminus: Verruculogen synthase (291 aa).

Belongs to the PhyH family. In terms of assembly, homodimer. Fe cation is required as a cofactor.

It catalyses the reaction fumitremorgin B + 2-oxoglutarate + AH2 + 2 O2 = verruculogen + succinate + A + CO2 + H2O. Its pathway is mycotoxin biosynthesis. Functionally, verruculogen synthase; part of the gene cluster that mediates the biosynthesis of fumitremorgins, indole alkaloids that carry not only intriguing chemical structures, but also interesting biological and pharmacological activities. The biosynthesis of fumitremorgin-type alkaloids begins by condensation of the two amino acids L-tryptophan and L-proline to brevianamide F, catalyzed by the non-ribosomal peptide synthetase ftmPS/ftmA. Brevianamide F is then prenylated by the prenyltransferase ftmPT1/ftmB in the presence of dimethylallyl diphosphate, resulting in the formation of tryprostatin B. The three cytochrome P450 monooxygenases, ftmP450-1/ftmC, ftmP450-2/ftmE and ftmP450-3/FtmG, are responsible for the conversion of tryprostatin B to 6-hydroxytryprostatin B, tryprostatin A to fumitremorgin C and fumitremorgin C to 12,13-dihydroxyfumitremorgin C, respectively. The putative methyltransferase ftmMT/ftmD is expected for the conversion of 6-hydroxytryprostatin B to tryprostatin A. FtmPT2/FtmH catalyzes the prenylation of 12,13-dihydroxyfumitre-morgin C in the presence of dimethylallyl diphosphate, resulting in the formation of fumitremorgin B. Fumitremorgin B is further converted to verruculogen by ftmOx1/ftmF via the insertion of an endoperoxide bond between the two prenyl moieties. Finally, verruculogen is further converted to fumitremorgin A by the verruculogen prenyltransferase ftmPT3. In Neosartorya fischeri (strain ATCC 1020 / DSM 3700 / CBS 544.65 / FGSC A1164 / JCM 1740 / NRRL 181 / WB 181) (Aspergillus fischerianus), this protein is Verruculogen synthase.